Here is a 502-residue protein sequence, read N- to C-terminus: UDP-N-acetylmuramate--L-alanine ligase (502 aa).

Gly120–Ser126 contributes to the ATP binding site.

Belongs to the MurCDEF family.

Its subcellular location is the cytoplasm. The catalysed reaction is UDP-N-acetyl-alpha-D-muramate + L-alanine + ATP = UDP-N-acetyl-alpha-D-muramoyl-L-alanine + ADP + phosphate + H(+). It functions in the pathway cell wall biogenesis; peptidoglycan biosynthesis. Functionally, cell wall formation. The chain is UDP-N-acetylmuramate--L-alanine ligase from Rhodococcus erythropolis (strain PR4 / NBRC 100887).